The following is a 120-amino-acid chain: Basic phospholipase A2 homolog piratoxin-3 (120 aa).

7 disulfides stabilise this stretch: Cys26/Cys113, Cys28/Cys44, Cys43/Cys94, Cys49/Cys120, Cys50/Cys87, Cys57/Cys81, and Cys75/Cys85. The important for membrane-damaging activities in eukaryotes and bacteria; heparin-binding stretch occupies residues 104–115 (KKYRYHLKPCKK).

Belongs to the phospholipase A2 family. Group II subfamily. D49 sub-subfamily. As to quaternary structure, homodimer; non-covalently linked (probable alternative/compact dimer conformation). Expressed by the venom gland.

The protein resides in the secreted. Its function is as follows. Snake venom phospholipase A2 (PLA2) that lacks enzymatic activity. Shows high myotoxin activities. Also has anticoagulant activity. A model of myotoxic mechanism has been proposed: an apo Lys49-PLA2 is activated by the entrance of a hydrophobic molecule (e.g. fatty acid) at the hydrophobic channel of the protein leading to a reorientation of a monomer. This reorientation causes a transition between 'inactive' to 'active' states, causing alignment of C-terminal and membrane-docking sites (MDoS) side-by-side and putting the membrane-disruption sites (MDiS) in the same plane, exposed to solvent and in a symmetric position for both monomers. The MDoS region stabilizes the toxin on membrane by the interaction of charged residues with phospholipid head groups. Subsequently, the MDiS region destabilizes the membrane with penetration of hydrophobic residues. This insertion causes a disorganization of the membrane, allowing an uncontrolled influx of ions (i.e. calcium and sodium), and eventually triggering irreversible intracellular alterations and cell death. This chain is Basic phospholipase A2 homolog piratoxin-3, found in Bothrops pirajai (Piraja's lancehead).